The following is a 211-amino-acid chain: RING finger protein 222 (211 aa).

The RING-type zinc finger occupies 14-65 (CPVCYEKFRDLDGASRTLSCGHVFCHDCLVKYLLSTRVDGQVQRTIVCPICR). A helical transmembrane segment spans residues 187 to 207 (LITLIAVVAVVAAILPWVLLV).

The protein resides in the membrane. The sequence is that of RING finger protein 222 (Rnf222) from Mus musculus (Mouse).